We begin with the raw amino-acid sequence, 70 residues long: Large ribosomal subunit protein bL32 (70 aa).

Basic residues predominate over residues 1-19 (MAVPKKKTSPSRRGMRRSH). A disordered region spans residues 1 to 21 (MAVPKKKTSPSRRGMRRSHQA).

Belongs to the bacterial ribosomal protein bL32 family.

This chain is Large ribosomal subunit protein bL32, found in Granulibacter bethesdensis (strain ATCC BAA-1260 / CGDNIH1).